The chain runs to 179 residues: Endoribonuclease YbeY (179 aa).

His148, His152, and His158 together coordinate Zn(2+).

This sequence belongs to the endoribonuclease YbeY family. It depends on Zn(2+) as a cofactor.

The protein localises to the cytoplasm. Its function is as follows. Single strand-specific metallo-endoribonuclease involved in late-stage 70S ribosome quality control and in maturation of the 3' terminus of the 16S rRNA. The protein is Endoribonuclease YbeY of Prochlorococcus marinus (strain MIT 9215).